The chain runs to 1347 residues: Spermatogenesis-associated protein 31A7 (1347 aa).

A helical transmembrane segment spans residues 23–43 (PWVLDIFLTLVFALGFFFLLL). Disordered stretches follow at residues 55 to 88 (PSPS…RECP), 106 to 233 (GPHL…RDST), 374 to 397 (QDTT…GPQK), 628 to 658 (DESP…EAQK), 900 to 955 (RGIP…REAV), 1084 to 1161 (VHEE…PSVS), and 1313 to 1335 (KAVS…SHHH). Basic residues predominate over residues 60 to 82 (GKRKCPVGRRRRPRGRMKNHSLR). Polar residues predominate over residues 165–178 (LASTPSPGPMTTSV). Pro residues predominate over residues 198–211 (PEPPALFPHPPHTP). 2 stretches are compositionally biased toward polar residues: residues 631 to 651 (PGTS…STGE) and 927 to 948 (LTYS…SSKA). Composition is skewed to basic and acidic residues over residues 1108 to 1127 (HKSE…RLEG) and 1137 to 1146 (RKTEDTHQDE).

Belongs to the SPATA31 family.

It localises to the membrane. Its function is as follows. May play a role in spermatogenesis. The polypeptide is Spermatogenesis-associated protein 31A7 (Homo sapiens (Human)).